Consider the following 702-residue polypeptide: Ribosomal RNA large subunit methyltransferase K/L (702 aa).

The 112-residue stretch at 43–154 (LVYQSLMWSR…KETASIALDL (112 aa)) folds into the THUMP domain.

The protein belongs to the methyltransferase superfamily. RlmKL family.

The protein localises to the cytoplasm. It carries out the reaction guanosine(2445) in 23S rRNA + S-adenosyl-L-methionine = N(2)-methylguanosine(2445) in 23S rRNA + S-adenosyl-L-homocysteine + H(+). The catalysed reaction is guanosine(2069) in 23S rRNA + S-adenosyl-L-methionine = N(2)-methylguanosine(2069) in 23S rRNA + S-adenosyl-L-homocysteine + H(+). Functionally, specifically methylates the guanine in position 2445 (m2G2445) and the guanine in position 2069 (m7G2069) of 23S rRNA. This is Ribosomal RNA large subunit methyltransferase K/L from Shigella sonnei (strain Ss046).